The primary structure comprises 362 residues: Sulfate/thiosulfate import ATP-binding protein CysA (362 aa).

Residues 3-237 (IEIHDLSKQF…PANPFVYEFL (235 aa)) enclose the ABC transporter domain. 35–42 (GPSGSGKT) contributes to the ATP binding site.

Belongs to the ABC transporter superfamily. Sulfate/tungstate importer (TC 3.A.1.6) family. The complex is composed of two ATP-binding proteins (CysA), two transmembrane proteins (CysT and CysW) and a solute-binding protein (CysP).

Its subcellular location is the cell inner membrane. It catalyses the reaction sulfate(out) + ATP + H2O = sulfate(in) + ADP + phosphate + H(+). It carries out the reaction thiosulfate(out) + ATP + H2O = thiosulfate(in) + ADP + phosphate + H(+). Its function is as follows. Part of the ABC transporter complex CysAWTP involved in sulfate/thiosulfate import. Responsible for energy coupling to the transport system. The protein is Sulfate/thiosulfate import ATP-binding protein CysA of Nitrosomonas europaea (strain ATCC 19718 / CIP 103999 / KCTC 2705 / NBRC 14298).